A 213-amino-acid polypeptide reads, in one-letter code: Embryo-specific protein ATS3 (213 aa).

The N-terminal stretch at 1–21 (MTFPSLSVSFLFFAFIFVTHA) is a signal peptide. Residues 34 to 148 (CPYTVVVMTS…LNTWYGHNNC (115 aa)) form the PLAT domain. The disordered stretch occupies residues 147-188 (NCNTTGRPSSPDLPPPHFPPEFPPETPTTPPPPPPRPSAASR). Asn149 carries N-linked (GlcNAc...) asparagine glycosylation. The segment covering 157–183 (PDLPPPHFPPEFPPETPTTPPPPPPRP) has biased composition (pro residues).

In terms of tissue distribution, expressed in seeds. Expression is restricted to the developing embryo.

It localises to the secreted. Functionally, may play a role during embryo development. The sequence is that of Embryo-specific protein ATS3 from Arabidopsis thaliana (Mouse-ear cress).